A 1360-amino-acid chain; its full sequence is Zinc finger protein GLI1 (1360 aa).

The interval 198-245 (DTIGSKRLEDGSEGDISSPASVGTQDPLLGLLDGRDDLEKDDGKHEPE) is disordered. Over residues 230–245 (DGRDDLEKDDGKHEPE) the composition is skewed to basic and acidic residues. Residues 250 to 275 (TNCHWESCTKEFDTQEHLVHHINNEH) form a C2H2-type 1 zinc finger. Residues 298–306 (KAQYMLVVH) are interaction with DNA. 3 consecutive C2H2-type zinc fingers follow at residues 316 to 340 (HKCTFEGCNKAYSRLENLKTHLRSH), 346 to 371 (YVCEHEGCNKAFSNASDRAKHQNRTH), and 377 to 402 (YVCKIPGCTKRYTDPSSLRKHVKTVH). Interaction with DNA stretches follow at residues 360 to 365 (ASDRAK) and 390 to 396 (DPSSLRK). 4 disordered regions span residues 390 to 434 (DPSS…NVKG), 457 to 500 (ITLK…SFED), 718 to 740 (IIHPAQAPGAGIRRASDPARTGG), and 1120 to 1213 (YMNY…IQPQ). Low complexity predominate over residues 461 to 473 (SQPSPGGQSSCSS). Residues 474 to 496 (ERSPLGSTNNNDSGVEMNANTGG) are compositionally biased toward polar residues. Positions 1134–1143 (SPSSQDSQSS) are enriched in low complexity. The span at 1173–1190 (RQHSVSSQSTYMGSPNQL) shows a compositional bias: polar residues.

This sequence belongs to the GLI C2H2-type zinc-finger protein family.

It is found in the cytoplasm. The protein localises to the nucleus. Its function is as follows. Acts as a transcriptional activator. Binds to the DNA consensus sequence 5'-GACCACCCA-3'. May regulate the transcription of specific genes during normal development. Mediates SHH signaling. Plays a role in cell proliferation and differentiation via its role in SHH signaling. The protein is Zinc finger protein GLI1 (gli1) of Xenopus laevis (African clawed frog).